The chain runs to 545 residues: MLAARLIILLSFYWLSASAIDPADPLFVDLPHGKIRGRDNGFYYSYESLPYAEPPVGELRFEAPQPYKQQWTDTFDATQPPVTCMQWNQFIFGDNKLAGVEDCLTVSIYKPKNTSQSSFPVVAHMHGGAFMFGEARQNGHENMMREGKLILVKISYRLGPLGFASTGDAGLSGNFGLKDQRLALLWIKQNIASFGGEPENIIVVGHSAGGASVHLQMLREDFAQVAKAGISFGGNAMDPWVIHRSARGRTFELGRIVGCGQASDSMELKNCLKSKPAGEIVSAVHSFLVFAYVPFAPFGPVVESPDAPEAFISQHPVDIIKSGKFAQVPWAVTYNTEDGGYNAAVLLEKQASSGRELIFDLNDHWFDWAPYLLFYRDSMTTIKDMDDYSRKLRQEYLGDRRFSVESYWDLQRLFTDVLYKNATELALDLYRKHGKSPVYAFVYDNPANTGIGQFFAKRTDVHFGTVHGDEYFLIFENLARGPEMRSDEEIISRNFLNMINDFVLSGNGTMTFGNCVLQDNVGSNKLQLLSITKNGCENLQLESFP.

The signal sequence occupies residues 1–19 (MLAARLIILLSFYWLSASA). A disulfide bridge links cysteine 84 with cysteine 103. An N-linked (GlcNAc...) asparagine glycan is attached at asparagine 113. Catalysis depends on serine 207, which acts as the Acyl-ester intermediate. Cysteine 259 and cysteine 271 are oxidised to a cystine. N-linked (GlcNAc...) asparagine glycosylation occurs at asparagine 421. Histidine 467 serves as the catalytic Charge relay system. N-linked (GlcNAc...) asparagine glycosylation is present at asparagine 507. Residues cysteine 515 and cysteine 536 are joined by a disulfide bond.

The protein belongs to the type-B carboxylesterase/lipase family.

Its subcellular location is the secreted. The catalysed reaction is a carboxylic ester + H2O = an alcohol + a carboxylate + H(+). The polypeptide is Esterase-5C (Est-5C) (Drosophila miranda (Fruit fly)).